A 48-amino-acid chain; its full sequence is Large ribosomal subunit protein bL36c (48 aa).

It belongs to the bacterial ribosomal protein bL36 family.

Its subcellular location is the plastid. The protein localises to the chloroplast. The polypeptide is Large ribosomal subunit protein bL36c (Rhodomonas salina (Cryptomonas salina)).